The sequence spans 251 residues: uncharacterized protein (251 aa).

The next 5 membrane-spanning stretches (helical) occupy residues Phe-22–Ile-42, Phe-86–Ala-106, Leu-120–Val-140, Leu-157–Val-177, and Ile-205–Ala-225.

Its subcellular location is the cell membrane. This is an uncharacterized protein from Mycoplasma pneumoniae (strain ATCC 29342 / M129 / Subtype 1) (Mycoplasmoides pneumoniae).